The chain runs to 157 residues: NADPH-dependent 7-cyano-7-deazaguanine reductase (157 aa).

The active-site Thioimide intermediate is Cys-55. Catalysis depends on Asp-62, which acts as the Proton donor. Substrate is bound by residues 77–79 (VES) and 96–97 (HE).

This sequence belongs to the GTP cyclohydrolase I family. QueF type 1 subfamily.

The protein localises to the cytoplasm. The catalysed reaction is 7-aminomethyl-7-carbaguanine + 2 NADP(+) = 7-cyano-7-deazaguanine + 2 NADPH + 3 H(+). It participates in tRNA modification; tRNA-queuosine biosynthesis. Its function is as follows. Catalyzes the NADPH-dependent reduction of 7-cyano-7-deazaguanine (preQ0) to 7-aminomethyl-7-deazaguanine (preQ1). The chain is NADPH-dependent 7-cyano-7-deazaguanine reductase from Neisseria meningitidis serogroup A / serotype 4A (strain DSM 15465 / Z2491).